A 67-amino-acid polypeptide reads, in one-letter code: Large ribosomal subunit protein bL35 (67 aa).

The protein belongs to the bacterial ribosomal protein bL35 family.

The polypeptide is Large ribosomal subunit protein bL35 (Methylorubrum populi (strain ATCC BAA-705 / NCIMB 13946 / BJ001) (Methylobacterium populi)).